Reading from the N-terminus, the 169-residue chain is Myosin regulatory light chain 2, skeletal muscle isoform A (169 aa).

Residue S21 is modified to Phosphoserine. 3 EF-hand domains span residues 26 to 61, 96 to 131, and 132 to 167; these read SQIQ…MGQL, DPED…QCDR, and FTAE…GEEK. D39, N41, D43, and D50 together coordinate Ca(2+).

In terms of assembly, myosin is a hexamer of 2 heavy chains and 4 light chains. Interacts with nanos3; the interaction negatively regulates mylpfa phosphorylation.

In terms of biological role, myosin regulatory subunit that plays a role to maintain muscle integrity during early development. Plays a role in muscle contraction. The chain is Myosin regulatory light chain 2, skeletal muscle isoform A (mylpfa) from Danio rerio (Zebrafish).